An 81-amino-acid polypeptide reads, in one-letter code: Photosystem I iron-sulfur center (81 aa).

2 consecutive 4Fe-4S ferredoxin-type domains span residues 2 to 31 and 39 to 68; these read SHSV…MVPW and IASA…VRVY. Residues cysteine 11, cysteine 14, cysteine 17, cysteine 21, cysteine 48, cysteine 51, cysteine 54, and cysteine 58 each contribute to the [4Fe-4S] cluster site.

In terms of assembly, the eukaryotic PSI reaction center is composed of at least 11 subunits. Requires [4Fe-4S] cluster as cofactor.

It is found in the plastid. Its subcellular location is the chloroplast thylakoid membrane. It carries out the reaction reduced [plastocyanin] + hnu + oxidized [2Fe-2S]-[ferredoxin] = oxidized [plastocyanin] + reduced [2Fe-2S]-[ferredoxin]. Its function is as follows. Apoprotein for the two 4Fe-4S centers FA and FB of photosystem I (PSI); essential for photochemical activity. FB is the terminal electron acceptor of PSI, donating electrons to ferredoxin. The C-terminus interacts with PsaA/B/D and helps assemble the protein into the PSI complex. Required for binding of PsaD and PsaE to PSI. PSI is a plastocyanin/cytochrome c6-ferredoxin oxidoreductase, converting photonic excitation into a charge separation, which transfers an electron from the donor P700 chlorophyll pair to the spectroscopically characterized acceptors A0, A1, FX, FA and FB in turn. In Emiliania huxleyi (Coccolithophore), this protein is Photosystem I iron-sulfur center.